Reading from the N-terminus, the 283-residue chain is Pyridoxal kinase PdxY (283 aa).

Residue serine 8 coordinates substrate. ATP contacts are provided by aspartate 110 and glutamate 147. Substrate is bound at residue aspartate 219.

This sequence belongs to the pyridoxine kinase family. PdxY subfamily. Homodimer. It depends on Mg(2+) as a cofactor.

It carries out the reaction pyridoxal + ATP = pyridoxal 5'-phosphate + ADP + H(+). It participates in cofactor metabolism; pyridoxal 5'-phosphate salvage; pyridoxal 5'-phosphate from pyridoxal: step 1/1. In terms of biological role, pyridoxal kinase involved in the salvage pathway of pyridoxal 5'-phosphate (PLP). Catalyzes the phosphorylation of pyridoxal to PLP. The protein is Pyridoxal kinase PdxY of Corynebacterium diphtheriae (strain ATCC 700971 / NCTC 13129 / Biotype gravis).